Reading from the N-terminus, the 353-residue chain is Photosystem II D2 protein (353 aa).

Thr-2 is modified (N-acetylthreonine). Position 2 is a phosphothreonine (Thr-2). The chain crosses the membrane as a helical span at residues 41–61 (CAYFAVGGWFTGTTFVTSWYT). Residue His-118 participates in chlorophyll a binding. Residues 125 to 141 (GFMLRQFELARSVQLRP) form a helical membrane-spanning segment. The pheophytin a site is built by Gln-130 and Asn-143. The chain crosses the membrane as a helical span at residues 153 to 166 (VFVSVFLIYPLGQS). Residue His-198 participates in chlorophyll a binding. The helical transmembrane segment at 208–228 (AALLCAIHGATVENTLFEDGD) threads the bilayer. Residues His-215 and Phe-262 each coordinate a plastoquinone. His-215 is a binding site for Fe cation. His-269 is a binding site for Fe cation. A helical transmembrane segment spans residues 279 to 295 (GLWMSALGVVGLALNLR).

It belongs to the reaction center PufL/M/PsbA/D family. PSII is composed of 1 copy each of membrane proteins PsbA, PsbB, PsbC, PsbD, PsbE, PsbF, PsbH, PsbI, PsbJ, PsbK, PsbL, PsbM, PsbT, PsbX, PsbY, PsbZ, Psb30/Ycf12, at least 3 peripheral proteins of the oxygen-evolving complex and a large number of cofactors. It forms dimeric complexes. It depends on The D1/D2 heterodimer binds P680, chlorophylls that are the primary electron donor of PSII, and subsequent electron acceptors. It shares a non-heme iron and each subunit binds pheophytin, quinone, additional chlorophylls, carotenoids and lipids. There is also a Cl(-1) ion associated with D1 and D2, which is required for oxygen evolution. The PSII complex binds additional chlorophylls, carotenoids and specific lipids. as a cofactor.

The protein resides in the plastid. It is found in the chloroplast thylakoid membrane. It carries out the reaction 2 a plastoquinone + 4 hnu + 2 H2O = 2 a plastoquinol + O2. Photosystem II (PSII) is a light-driven water:plastoquinone oxidoreductase that uses light energy to abstract electrons from H(2)O, generating O(2) and a proton gradient subsequently used for ATP formation. It consists of a core antenna complex that captures photons, and an electron transfer chain that converts photonic excitation into a charge separation. The D1/D2 (PsbA/PsbD) reaction center heterodimer binds P680, the primary electron donor of PSII as well as several subsequent electron acceptors. D2 is needed for assembly of a stable PSII complex. This Guizotia abyssinica (Niger) protein is Photosystem II D2 protein.